The sequence spans 1203 residues: Potassium/sodium hyperpolarization-activated cyclic nucleotide-gated channel 4 (1203 aa).

The tract at residues 1–182 (MDKLPPSMRK…QPASASCEQP (182 aa)) is disordered. At 1–263 (MDKLPPSMRK…IIHPYSDFRF (263 aa)) the chain is on the cytoplasmic side. The segment covering 26–36 (MDEEEDAEEEG) has biased composition (acidic residues). Over residues 105–117 (SRGGGSGGTGSGS) the composition is skewed to gly residues. The segment covering 121–133 (HLHDSAEERRLIA) has biased composition (basic and acidic residues). Ser138 bears the Phosphoserine mark. Pro residues predominate over residues 163-174 (ASPPPPQQPPQP). Positions 209-260 (GQAGFMQRQFGAMLQPGVNKFSLRMFGSQKAVEREQERVKSAGFWIIHPYSD) are involved in subunit assembly. Residues 264-286 (YWDLTMLLLMVGNLIIIPVGITF) traverse the membrane as a helical segment. The Extracellular segment spans residues 287-293 (FKDENTT). Residues 294-314 (PWIVFNVVSDTFFLIDLVLNF) form a helical membrane-spanning segment. Residues 315–336 (RTGIVVEDNTEIILDPQRIKMK) are Cytoplasmic-facing. The helical transmembrane segment at 337–359 (YLKSWFMVDFISSIPVDYIFLIV) threads the bilayer. Residues 360–378 (ETRIDSEVYKTARALRIVR) lie on the Extracellular side of the membrane. A helical; Voltage-sensor transmembrane segment spans residues 379–399 (FTKILSLLRLLRLSRLIRYIH). The Cytoplasmic segment spans residues 400 to 413 (QWEEIFHMTYDLAS). Residues 414–436 (AVVRIVNLIGMMLLLCHWDGCLQ) form a helical membrane-spanning segment. Topologically, residues 437-464 (FLVPMLQDFPDDCWVSINNMVNNSWGKQ) are extracellular. Residue Asn458 is glycosylated (N-linked (GlcNAc...) asparagine). An intramembrane region (pore-forming) is located at residues 465–486 (YSYALFKAMSHMLCIGYGRQAP). Residues 487–491 (VGMSD) lie on the Extracellular side of the membrane. The chain crosses the membrane as a helical span at residues 492-517 (VWLTMLSMIVGATCYAMFIGHATALI). The Cytoplasmic portion of the chain corresponds to 518 to 1203 (QSLDSSRRQY…PVRSKLPSNL (686 aa)). Tyr559, Lys562, Phe564, and Glu566 together coordinate 3',5'-cyclic GMP. Gly659, Glu660, Cys662, Arg669, Thr670, Val673, and Arg710 together coordinate 3',5'-cyclic AMP. 3 disordered regions span residues 836-856 (ALGS…SSSS), 870-897 (GLSP…TPSA), and 918-1203 (LSSS…PSNL). 2 stretches are compositionally biased toward low complexity: residues 918–941 (LSSS…AAQP) and 966–986 (RSPS…SLGL). The span at 995-1004 (ETPPRQPEPP) shows a compositional bias: pro residues. Positions 1005–1028 (SLVAGASGGASPVGFTPRGGLSPP) are enriched in low complexity. Positions 1029–1042 (GHSPGPPRTFPSAP) are enriched in pro residues. Residues 1045–1056 (ASGSHGSLLLPP) show a composition bias toward low complexity. Ser1105 and Ser1108 each carry phosphoserine. A compositionally biased stretch (gly residues) spans 1122–1137 (AGGGSGGSGSSGGLGP).

It belongs to the potassium channel HCN family. As to quaternary structure, homotetramer. The channel assemble into homotetramers or heteromeric complexes that contains of four pore-forming subunits. Interacts with PEX5L with a 4:4 HCN4:PEX5L stoichiometry; reduces the effects of cAMP on the voltage-dependence and rate of activation. Interacts with IRAG1; regulates HCN4 channel activity. Interacts with IRAG2; regulates HCN4 channel activity. Post-translationally, S-palmitoylated. Highly expressed in thalamus, testis and in heart, both in ventricle and atrium. Detected at much lower levels in amygdala, substantia nigra, cerebellum and hippocampus.

It localises to the cell membrane. It catalyses the reaction K(+)(in) = K(+)(out). The catalysed reaction is Na(+)(in) = Na(+)(out). Activated by cAMP and to a lesser extent by cGMP and cCMP. cAMP binding causes a conformation change that leads to the assembly of an active tetramer and channel opening. Binding of cAMP removes a tonic inhibition conferred by cyclic nucleotide-binding domain (CNBD) on channel opening. Cyclic dinucleotides can modulate HCN4 channel; cyclic dinucleotides acting as potent antagonists of cAMP. Inhibited by extracellular Cs(+) ions. Auxiliary subunits can also regulate HCN4 channel. IRAG1 causes a gain-of-function by shifting HCN4 activation to more depolarized membrane potentials in the absence of cAMP. In contrast, IRAG2 causes a loss-of-function by inhibiting cAMP-dependent potentiation of HCN4 activation. Hyperpolarization-activated ion channel that are permeable to Na(+) and K(+) ions with very slow activation and inactivation. Exhibits higher selectivity for K(+) over Na(+) ions. Contributes to the native pacemaker currents in heart (If) that regulate the rhythm of heart beat. Contributes to the native pacemaker currents in neurons (Ih). May mediate responses to sour stimuli. The polypeptide is Potassium/sodium hyperpolarization-activated cyclic nucleotide-gated channel 4 (Homo sapiens (Human)).